Reading from the N-terminus, the 142-residue chain is Large ribosomal subunit protein uL16 (142 aa).

The protein belongs to the universal ribosomal protein uL16 family. In terms of assembly, part of the 50S ribosomal subunit.

Binds 23S rRNA and is also seen to make contacts with the A and possibly P site tRNAs. The chain is Large ribosomal subunit protein uL16 from Thermosipho melanesiensis (strain DSM 12029 / CIP 104789 / BI429).